We begin with the raw amino-acid sequence, 365 residues long: Alanine racemase (365 aa).

The Proton acceptor; specific for D-alanine role is filled by lysine 32. The residue at position 32 (lysine 32) is an N6-(pyridoxal phosphate)lysine. Arginine 128 is a substrate binding site. Catalysis depends on tyrosine 257, which acts as the Proton acceptor; specific for L-alanine. Substrate is bound at residue methionine 305.

Belongs to the alanine racemase family. Pyridoxal 5'-phosphate serves as cofactor.

The catalysed reaction is L-alanine = D-alanine. The protein operates within amino-acid biosynthesis; D-alanine biosynthesis; D-alanine from L-alanine: step 1/1. Its function is as follows. Catalyzes the interconversion of L-alanine and D-alanine. May also act on other amino acids. This chain is Alanine racemase (alr), found in Francisella tularensis subsp. holarctica (strain LVS).